A 905-amino-acid polypeptide reads, in one-letter code: DNA gyrase subunit A (905 aa).

One can recognise a Topo IIA-type catalytic domain in the interval 35–524 (IPDVRDGLKP…GEFDQDIEDL (490 aa)). Tyrosine 123 (O-(5'-phospho-DNA)-tyrosine intermediate) is an active-site residue. Positions 551-557 (QKRGGKG) match the GyrA-box motif.

Belongs to the type II topoisomerase GyrA/ParC subunit family. Heterotetramer, composed of two GyrA and two GyrB chains. In the heterotetramer, GyrA contains the active site tyrosine that forms a transient covalent intermediate with DNA, while GyrB binds cofactors and catalyzes ATP hydrolysis.

It localises to the cytoplasm. The enzyme catalyses ATP-dependent breakage, passage and rejoining of double-stranded DNA.. Its function is as follows. A type II topoisomerase that negatively supercoils closed circular double-stranded (ds) DNA in an ATP-dependent manner to modulate DNA topology and maintain chromosomes in an underwound state. Negative supercoiling favors strand separation, and DNA replication, transcription, recombination and repair, all of which involve strand separation. Also able to catalyze the interconversion of other topological isomers of dsDNA rings, including catenanes and knotted rings. Type II topoisomerases break and join 2 DNA strands simultaneously in an ATP-dependent manner. The chain is DNA gyrase subunit A from Rickettsia prowazekii (strain Madrid E).